The primary structure comprises 417 residues: Carbon catabolite repressor protein 4 homolog 4 (417 aa).

Phenylalanine 2 bears the N-acetylserine mark. Glutamate 143 is a Mg(2+) binding site.

The protein belongs to the CCR4/nocturin family. Component of the CCR4-NOT complex, at least composed of CRR4 and CAF1 proteins. Forms homooligomers. Requires Mg(2+) as cofactor.

Its subcellular location is the nucleus. The protein resides in the cytoplasm. The catalysed reaction is Exonucleolytic cleavage of poly(A) to 5'-AMP.. Its function is as follows. Acts as a catalytic component of the CCR4-NOT core complex, which in the nucleus seems to be a general transcription factor, and in the cytoplasm the major mRNA deadenylase involved in mRNA turnover. Transcriptional regulator of circadian rhythms with poly(A)-degrading activity that affects the expression and rhythmicity of the clock core oscillator genes TOC1 and CCA1. Deadenylation may be a mechanism involved in the regulation of the circadian clock. May play a negative role in response against oxidative stress. Possesses magnesium-dependent poly(A)-specific exoribonuclease activity in vitro and is almost inactive with poly(U), poly(C) and poly(G) as substrates. The protein is Carbon catabolite repressor protein 4 homolog 4 of Arabidopsis thaliana (Mouse-ear cress).